The chain runs to 501 residues: Cytochrome P450 7A1 (501 aa).

Residues 4-24 (ISLLGGIVTAVCCCLWLLLGM) form a helical membrane-spanning segment. Residue Cys-441 participates in heme binding.

The protein belongs to the cytochrome P450 family. Requires heme as cofactor.

The protein resides in the endoplasmic reticulum membrane. The protein localises to the microsome membrane. The catalysed reaction is cholesterol + reduced [NADPH--hemoprotein reductase] + O2 = 7alpha-hydroxycholesterol + oxidized [NADPH--hemoprotein reductase] + H2O + H(+). It catalyses the reaction 4beta-hydroxycholesterol + reduced [NADPH--hemoprotein reductase] + O2 = 4beta,7alpha-dihydroxycholesterol + oxidized [NADPH--hemoprotein reductase] + H2O + H(+). It carries out the reaction lathosterol + reduced [NADPH--hemoprotein reductase] + O2 = 7alpha,8alpha-epoxy-5alpha-cholestan-3beta-ol + oxidized [NADPH--hemoprotein reductase] + H2O + H(+). The enzyme catalyses lathosterol + reduced [NADPH--hemoprotein reductase] + O2 = 5alpha-cholestan-7-oxo-3beta-ol + oxidized [NADPH--hemoprotein reductase] + H2O + H(+). The catalysed reaction is 7-dehydrocholesterol + reduced [NADPH--hemoprotein reductase] + O2 = 7-oxocholesterol + oxidized [NADPH--hemoprotein reductase] + H2O + H(+). It catalyses the reaction (24S)-hydroxycholesterol + reduced [NADPH--hemoprotein reductase] + O2 = (24S)-7alpha-dihydroxycholesterol + oxidized [NADPH--hemoprotein reductase] + H2O + H(+). It carries out the reaction (24R)-hydroxycholesterol + reduced [NADPH--hemoprotein reductase] + O2 = (24R)-7alpha-dihydroxycholesterol + oxidized [NADPH--hemoprotein reductase] + H2O + H(+). It functions in the pathway lipid metabolism; bile acid biosynthesis. Its pathway is steroid metabolism; cholesterol degradation. In terms of biological role, a cytochrome P450 monooxygenase involved in the metabolism of endogenous cholesterol and its oxygenated derivatives (oxysterols). Mechanistically, uses molecular oxygen inserting one oxygen atom into a substrate, and reducing the second into a water molecule, with two electrons provided by NADPH via cytochrome P450 reductase (CPR; NADPH-ferrihemoprotein reductase). Functions as a critical regulatory enzyme of bile acid biosynthesis and cholesterol homeostasis. Catalyzes the hydroxylation of carbon hydrogen bond at 7-alpha position of cholesterol, a rate-limiting step in cholesterol catabolism and bile acid biosynthesis. 7-alpha hydroxylates several oxysterols, including 4beta-hydroxycholesterol and 24-hydroxycholesterol. Catalyzes the oxidation of the 7,8 double bond of 7-dehydrocholesterol and lathosterol with direct and predominant formation of the 7-keto derivatives. The polypeptide is Cytochrome P450 7A1 (CYP7A1) (Sus scrofa (Pig)).